The sequence spans 66 residues: Large ribosomal subunit protein bL35 (66 aa).

Belongs to the bacterial ribosomal protein bL35 family.

The chain is Large ribosomal subunit protein bL35 from Beijerinckia indica subsp. indica (strain ATCC 9039 / DSM 1715 / NCIMB 8712).